A 360-amino-acid polypeptide reads, in one-letter code: Lactosylceramide 4-alpha-galactosyltransferase (360 aa).

The Cytoplasmic segment spans residues 1-30 (MGISRSDLEETMSKPPDCLPRMLRGTPRQR). Residues 31-51 (VFTLFIISFKFTFLVSILIYW) traverse the membrane as a helical; Signal-anchor for type II membrane protein segment. Topologically, residues 52 to 360 (HTVGAPKDQR…TTHRAMTMYL (309 aa)) are lumenal. Residues 199 to 201 (DTD) carry the DXD motif motif. 2 N-linked (GlcNAc...) asparagine glycosylation sites follow: Asn210 and Asn316.

The protein belongs to the glycosyltransferase 32 family. In terms of tissue distribution, ubiquitous. Highly expressed in kidney, mesenteric lymph node, spleen and brain.

It localises to the golgi apparatus membrane. The catalysed reaction is a beta-D-Gal-(1-&gt;4)-beta-D-Glc-(1&lt;-&gt;1)-Cer(d18:1(4E)) + UDP-alpha-D-galactose = a globoside Gb3Cer (d18:1(4E)) + UDP + H(+). It carries out the reaction a beta-D-Gal-(1&lt;-&gt;1')-ceramide + UDP-alpha-D-galactose = alpha-D-Gal-(1-&gt;4)-beta-D-Gal-(1&lt;-&gt;1')-Cer + UDP + H(+). Its pathway is glycolipid biosynthesis. Functionally, catalyzes the transfer of galactose from UDP-alpha-D-galactose to lactosylceramide/beta-D-galactosyl-(1-&gt;4)-beta-D-glucosyl-(1&lt;-&gt;1)-ceramide(d18:1(4E)) to produce globotriaosylceramide/globoside Gb3Cer (d18:1(4E)). Also able to transfer galactose to galactosylceramide/beta-D-Gal-(1&lt;-&gt;1')-Cer. Globoside Gb3Cer is a glycosphingolipid of the globo serie, one of the major types of neutral root structures of glycosphingolipids, that constitute a significant portion of mammalian cell membranes. This Rattus norvegicus (Rat) protein is Lactosylceramide 4-alpha-galactosyltransferase.